The primary structure comprises 488 residues: Germacrene A hydroxylase (488 aa).

Residues Met1 to Thr6 lie on the Cytoplasmic side of the membrane. A helical; Signal-anchor for type II membrane protein membrane pass occupies residues Thr7 to Thr23. Residues Arg24–Phe488 lie on the Lumenal side of the membrane. Residues Asn260 and Asn379 are each glycosylated (N-linked (GlcNAc...) asparagine). Cys432 contributes to the heme binding site.

This sequence belongs to the cytochrome P450 family. Requires heme as cofactor.

Its subcellular location is the endoplasmic reticulum membrane. It is found in the microsome membrane. The enzyme catalyses (+)-(R)-germacrene A + 3 reduced [NADPH--hemoprotein reductase] + 3 O2 = germacra-1(10),4,11(13)-trien-12-oate + 3 oxidized [NADPH--hemoprotein reductase] + 4 H2O + 4 H(+). It functions in the pathway secondary metabolite biosynthesis; terpenoid biosynthesis. Its activity is regulated as follows. Inhibited by cytochrome C, miconazole, aminobenzotriazole, metyrapone and clotrimazole. Functionally, involved in the biosynthesis of germacrene-derived sesquiterpene lactones. Catalyzes three consecutive oxidations of germacrene A to produce germacrene A acid. Could also catalyze the three-step oxidation of non-natural substrate amorphadiene to artemisinic acid. Can use beta-elemene as substrate. The chain is Germacrene A hydroxylase from Cichorium intybus (Chicory).